The following is a 181-amino-acid chain: Disulfide bond formation protein B (181 aa).

Over M1 to A13 the chain is Cytoplasmic. A helical transmembrane segment spans residues W14–Y30. Over F31–M48 the chain is Periplasmic. A disulfide bond links C40 and C43. The helical transmembrane segment at A49 to S64 threads the bilayer. The Cytoplasmic segment spans residues G65–W71. Residues A72 to Y89 traverse the membrane as a helical segment. Residues D90–G145 are Periplasmic-facing. An intrachain disulfide couples C105 to C131. A helical membrane pass occupies residues W146–C164. Topologically, residues H165–K181 are cytoplasmic.

It belongs to the DsbB family.

The protein localises to the cell inner membrane. Its function is as follows. Required for disulfide bond formation in some periplasmic proteins. Acts by oxidizing the DsbA protein. This Idiomarina loihiensis (strain ATCC BAA-735 / DSM 15497 / L2-TR) protein is Disulfide bond formation protein B.